Reading from the N-terminus, the 367-residue chain is Uroporphyrinogen decarboxylase (367 aa).

Residues 28–32 (RQAGR), D78, Y158, T213, and H334 each bind substrate.

The protein belongs to the uroporphyrinogen decarboxylase family. Homodimer.

The protein localises to the cytoplasm. It carries out the reaction uroporphyrinogen III + 4 H(+) = coproporphyrinogen III + 4 CO2. Its pathway is porphyrin-containing compound metabolism; protoporphyrin-IX biosynthesis; coproporphyrinogen-III from 5-aminolevulinate: step 4/4. Its function is as follows. Catalyzes the decarboxylation of four acetate groups of uroporphyrinogen-III to yield coproporphyrinogen-III. This chain is Uroporphyrinogen decarboxylase, found in Ralstonia pickettii (strain 12J).